Reading from the N-terminus, the 328-residue chain is 17-beta-hydroxysteroid dehydrogenase type 1 (328 aa).

Residues 10-38 (GCSS…ATLR) and aspartate 66 contribute to the NADP(+) site. The residue at position 135 (serine 135) is a Phosphoserine; by PKA. Substrate is bound at residue serine 143. Tyrosine 156 serves as the catalytic Proton acceptor. Lysine 160 contributes to the NADP(+) binding site. Residues 291-328 (KAEAGAEAGGGAGPGAEDEAGRGAVGDPELGDPPAAPQ) form a disordered region.

The protein belongs to the short-chain dehydrogenases/reductases (SDR) family. As to quaternary structure, homodimer. Exists predominantly as a homodimer but also exits as monomer.

The protein localises to the cytoplasm. The catalysed reaction is 17beta-estradiol + NAD(+) = estrone + NADH + H(+). The enzyme catalyses 17beta-estradiol + NADP(+) = estrone + NADPH + H(+). It carries out the reaction testosterone + NADP(+) = androst-4-ene-3,17-dione + NADPH + H(+). The protein operates within steroid biosynthesis; estrogen biosynthesis. Favors the reduction of estrogens and androgens. Converts estrone (E1) to a more potent estrogen, 17beta-estradiol (E2). Also has 20-alpha-HSD activity. Uses preferentially NADH. In Homo sapiens (Human), this protein is 17-beta-hydroxysteroid dehydrogenase type 1.